The chain runs to 296 residues: Ribosomal RNA small subunit methyltransferase A (296 aa).

S-adenosyl-L-methionine contacts are provided by N30, L32, G57, E78, D103, and N128.

Belongs to the class I-like SAM-binding methyltransferase superfamily. rRNA adenine N(6)-methyltransferase family. RsmA subfamily.

The protein resides in the cytoplasm. The enzyme catalyses adenosine(1518)/adenosine(1519) in 16S rRNA + 4 S-adenosyl-L-methionine = N(6)-dimethyladenosine(1518)/N(6)-dimethyladenosine(1519) in 16S rRNA + 4 S-adenosyl-L-homocysteine + 4 H(+). Functionally, specifically dimethylates two adjacent adenosines (A1518 and A1519) in the loop of a conserved hairpin near the 3'-end of 16S rRNA in the 30S particle. May play a critical role in biogenesis of 30S subunits. The chain is Ribosomal RNA small subunit methyltransferase A from Staphylococcus epidermidis (strain ATCC 35984 / DSM 28319 / BCRC 17069 / CCUG 31568 / BM 3577 / RP62A).